Here is a 1053-residue protein sequence, read N- to C-terminus: uncharacterized protein (1053 aa).

This sequence belongs to the mycobacterial PPE family.

This is an uncharacterized protein from Mycobacterium tuberculosis (strain ATCC 25618 / H37Rv).